A 689-amino-acid polypeptide reads, in one-letter code: Beta-galactosidase BbgII (689 aa).

Residues R122 and N160 each contribute to the substrate site. E161 serves as the catalytic Proton donor. Catalysis depends on E320, which acts as the Nucleophile. Residues W328 and 368–371 contribute to the substrate site; that span reads EKWH.

This sequence belongs to the glycosyl hydrolase 42 family.

The catalysed reaction is Hydrolysis of terminal non-reducing beta-D-galactose residues in beta-D-galactosides.. The sequence is that of Beta-galactosidase BbgII from Bifidobacterium bifidum (strain DSM 20082 / JCM 1254 / BCRC 11844 / KCTC 3440 / E319f (Variant a)).